Here is a 259-residue protein sequence, read N- to C-terminus: Phosphate import ATP-binding protein PstB (259 aa).

One can recognise an ABC transporter domain in the interval 5-248 (IEVNDLNVYY…NIIFSNPSAQ (244 aa)). 37–44 (GPSGCGKS) contributes to the ATP binding site.

Belongs to the ABC transporter superfamily. Phosphate importer (TC 3.A.1.7) family. The complex is composed of two ATP-binding proteins (PstB), two transmembrane proteins (PstC and PstA) and a solute-binding protein (PstS).

The protein localises to the cell membrane. It catalyses the reaction phosphate(out) + ATP + H2O = ADP + 2 phosphate(in) + H(+). Part of the ABC transporter complex PstSACB involved in phosphate import. Responsible for energy coupling to the transport system. The chain is Phosphate import ATP-binding protein PstB from Leifsonia xyli subsp. xyli (strain CTCB07).